Reading from the N-terminus, the 395-residue chain is MKILVLNSGSSSIKFKFFDNKVVKASGLVEKIGEQNSKVILKNVLNNESFERELMINNHEEGLSIVNELFKESGILADLNALDGCGHRIVHGGRNLSEHCLVDDYVLKEIDRVSIFAPLHNPAHLAGIKTMIKAAPSVANVAIFDTAFHRTMPDFAYMYALPYDFYDKHNIRRYGFHGTSHAFVSSRAASLLEKDKSELNVISAHLGNGASVCAIEKGKSVDTSMGFTPLEGLVMGTRCGDLDPAILPFISHLKGLTIEEIDTLMNKKSGVYGICGYNDFRDIEREIEQGNDKARLALDMFCYRLVKYIGSYFAVLPKTDAIIFTGGIGENDSLVRQKVCERLAHLGIELDFELNKQRISGERMINHANSKVKVLVIPTDEELEIARITEELISN.

Residue N7 participates in Mg(2+) binding. K14 is a binding site for ATP. R88 contacts substrate. Catalysis depends on D145, which acts as the Proton donor/acceptor. ATP contacts are provided by residues 205 to 209 (HLGNG), 279 to 281 (DFR), and 327 to 331 (GIGEN). E381 serves as a coordination point for Mg(2+).

Belongs to the acetokinase family. As to quaternary structure, homodimer. It depends on Mg(2+) as a cofactor. Requires Mn(2+) as cofactor.

The protein resides in the cytoplasm. The enzyme catalyses acetate + ATP = acetyl phosphate + ADP. The protein operates within metabolic intermediate biosynthesis; acetyl-CoA biosynthesis; acetyl-CoA from acetate: step 1/2. Its function is as follows. Catalyzes the formation of acetyl phosphate from acetate and ATP. Can also catalyze the reverse reaction. In Campylobacter jejuni subsp. jejuni serotype O:6 (strain 81116 / NCTC 11828), this protein is Acetate kinase.